The sequence spans 314 residues: Acetyl-coenzyme A carboxylase carboxyl transferase subunit beta, chloroplastic (314 aa).

In terms of domain architecture, CoA carboxyltransferase N-terminal spans Leu-47 to Val-314. Cys-51, Cys-54, Cys-70, and Cys-73 together coordinate Zn(2+). The C4-type zinc-finger motif lies at Cys-51–Cys-73.

This sequence belongs to the AccD/PCCB family. In terms of assembly, acetyl-CoA carboxylase is a heterohexamer composed of biotin carboxyl carrier protein, biotin carboxylase and 2 subunits each of ACCase subunit alpha and ACCase plastid-coded subunit beta (accD). It depends on Zn(2+) as a cofactor.

It is found in the plastid. The protein localises to the chloroplast stroma. It carries out the reaction N(6)-carboxybiotinyl-L-lysyl-[protein] + acetyl-CoA = N(6)-biotinyl-L-lysyl-[protein] + malonyl-CoA. Its pathway is lipid metabolism; malonyl-CoA biosynthesis; malonyl-CoA from acetyl-CoA: step 1/1. Component of the acetyl coenzyme A carboxylase (ACC) complex. Biotin carboxylase (BC) catalyzes the carboxylation of biotin on its carrier protein (BCCP) and then the CO(2) group is transferred by the transcarboxylase to acetyl-CoA to form malonyl-CoA. This is Acetyl-coenzyme A carboxylase carboxyl transferase subunit beta, chloroplastic from Angiopteris lygodiifolia (Turnip fern).